We begin with the raw amino-acid sequence, 317 residues long: uncharacterized protein (317 aa).

Topologically, residues 1 to 13 (MKRVTGVFLTLLR) are cytoplasmic. A helical transmembrane segment spans residues 14–34 (FSQFASSVLVMSLLAYAIHAY). Residues 35 to 49 (GNRGNKKTNFTLATG) lie on the Extracellular side of the membrane. Asn43 carries N-linked (GlcNAc...) asparagine glycosylation. Residues 50-70 (VISVFYLIALGILCLALPTLI) traverse the membrane as a helical segment. A topological domain (cytoplasmic) is located at residue Tyr71. A helical transmembrane segment spans residues 72-92 (IGMYFCAELIVCMLWLAAFVV). The Extracellular segment spans residues 93 to 133 (LAKAQGERSCSNTNADGLYYNPYSGQYTADSHRRACNSSQA). An N-linked (GlcNAc...) asparagine glycan is attached at Asn129. Residues 134–154 (AIAFSGLCFVLFLISVILLGI) form a helical membrane-spanning segment. The Cytoplasmic portion of the chain corresponds to 155–317 (NVLTPIRKRY…EPNRNVNQMP (163 aa)). Residues 204–317 (RTGDVEAGAG…EPNRNVNQMP (114 aa)) are disordered. Residues 239-250 (TTTTNTRYTTTT) are compositionally biased toward low complexity. Residues 256 to 282 (RYTTNDRNPGSANVANSAVDQHAYSTD) are compositionally biased toward polar residues. Over residues 284–295 (SGDRSYQEKVTE) the composition is skewed to basic and acidic residues. The span at 302-317 (MSGSTAEPNRNVNQMP) shows a compositional bias: polar residues.

It localises to the membrane. This is an uncharacterized protein from Saccharomyces cerevisiae (strain ATCC 204508 / S288c) (Baker's yeast).